The following is a 97-amino-acid chain: Defensin-like protein 301 (97 aa).

The first 24 residues, 1–24 (MEKVTSIFFVLLLISSCLILRSQG), serve as a signal peptide directing secretion. 6 disulfides stabilise this stretch: C28-C47, C34-C53, C39-C55, C65-C84, C71-C92, and C76-C94.

This sequence belongs to the DEFL family.

Its subcellular location is the secreted. This is Defensin-like protein 301 from Arabidopsis thaliana (Mouse-ear cress).